The primary structure comprises 887 residues: 3-hydroxy-3-methylglutaryl-coenzyme A reductase (887 aa).

Topologically, residues 1 to 9 are cytoplasmic; sequence MLSRLFRMH. The chain crosses the membrane as a helical span at residues 10 to 39; sequence GLFVASHPWEVIVGTVTLTICMMSMNMFTG. The Lumenal portion of the chain corresponds to 40 to 56; that stretch reads NNKICGWNYECPKFEED. A helical membrane pass occupies residues 57-78; that stretch reads VLSSDIIILTITRCIAILYIYF. The 158-residue stretch at 61-218 folds into the SSD domain; it reads DIIILTITRC…MTFFPACVSL (158 aa). The INSIG-binding motif signature appears at 75-78; sequence YIYF. The Cytoplasmic portion of the chain corresponds to 79-89; the sequence is QFQNLRQLGSK. A Glycyl lysine isopeptide (Lys-Gly) (interchain with G-Cter in ubiquitin) cross-link involves residue K89. A helical transmembrane segment spans residues 90-114; the sequence is YILGIAGLFTIFSSFVFSTVVIHFL. The Lumenal portion of the chain corresponds to 115-123; it reads DKELTGLNE. The helical transmembrane segment at 124-149 threads the bilayer; the sequence is ALPFFLLLIDLSRASALAKFALSSNS. Residues 150–159 lie on the Cytoplasmic side of the membrane; it reads QDEVRENIAR. A helical membrane pass occupies residues 160–187; sequence GMAILGPTFTLDALVECLVIGVGTMSGV. The Lumenal portion of the chain corresponds to 188–191; it reads RQLE. A helical membrane pass occupies residues 192–220; sequence IMCCFGCMSVLANYFVFMTFFPACVSLVL. Residues 221–248 are Cytoplasmic-facing; sequence ELSRESREGRPIWQLSHFARVLEEEENK. K248 participates in a covalent cross-link: Glycyl lysine isopeptide (Lys-Gly) (interchain with G-Cter in ubiquitin). Residues 249 to 275 form a helical membrane-spanning segment; the sequence is PNPVTQRVKMIMSLGLVLVHAHSRWIA. The Lumenal segment spans residues 276–314; the sequence is DPSPQNSTTEHSKVSLGLDEDVSKRIEPSVSLWQFYLSK. A glycan (N-linked (GlcNAc...) asparagine) is linked at N281. A helical membrane pass occupies residues 315-339; it reads MISMDIEQVVTLSLAFLLAVKYIFF. At 340-887 the chain is on the cytoplasmic side; sequence EQAETESTLS…LQGTCTKKSA (548 aa). Catalysis depends on charge relay system residues E558, K690, and D766. H865 acts as the Proton donor in catalysis. S871 carries the post-translational modification Phosphoserine; by AMPK.

It belongs to the HMG-CoA reductase family. In terms of assembly, homotetramer. Homodimer. Interacts (via its SSD) with INSIG1; the interaction, accelerated by sterols, leads to the recruitment of HMGCR to AMFR/gp78 for its ubiquitination by the sterol-mediated ERAD pathway. Interacts with UBIAD1. Post-translationally, N-glycosylated. Glycosylated with high mannose chains including Man(6)(GlcNAc)(2), Man(7)(GlcNAc)(2) and Man(8)(GlcNAc)(2). Deglycosylated by NGLY1 on release from the endoplasmic reticulum (ER) in a sterol-mediated manner. In terms of processing, undergoes sterol-mediated ubiquitination and ER-associated degradation (ERAD). Accumulation of sterols in the endoplasmic reticulum (ER) membrane, triggers binding of the reductase to the ER membrane protein INSIG1 or INSIG2. The INSIG1 binding leads to the recruitment of the ubiquitin ligase, AMFR/gp78, RNF139 or RNF145, initiating ubiquitination of the reductase. The ubiquitinated reductase is then extracted from the ER membrane and delivered to cytosolic 26S proteosomes by a mechanism probably mediated by the ATPase Valosin-containing protein VCP/p97. The INSIG2-binding leads to the recruitment of the ubiquitin ligase RNF139, initiating ubiquitination of the reductase. Lys-248 is the main site of ubiquitination. Ubiquitination is enhanced by the presence of a geranylgeranylated protein. Phosphorylated. Phosphorylation at Ser-871 reduces the catalytic activity.

The protein resides in the endoplasmic reticulum membrane. Its subcellular location is the peroxisome membrane. The catalysed reaction is (R)-mevalonate + 2 NADP(+) + CoA = (3S)-3-hydroxy-3-methylglutaryl-CoA + 2 NADPH + 2 H(+). It participates in metabolic intermediate biosynthesis; (R)-mevalonate biosynthesis; (R)-mevalonate from acetyl-CoA: step 3/3. Its activity is regulated as follows. Regulated by a negative feedback mechanism through sterols and non-sterol metabolites derived from mevalonate. Phosphorylation at Ser-871 down-regulates the catalytic activity. Its function is as follows. Catalyzes the conversion of (3S)-hydroxy-3-methylglutaryl-CoA (HMG-CoA) to mevalonic acid, the rate-limiting step in the synthesis of cholesterol and other isoprenoids, thus plays a critical role in cellular cholesterol homeostasis. The chain is 3-hydroxy-3-methylglutaryl-coenzyme A reductase (HMGCR) from Cricetulus griseus (Chinese hamster).